A 133-amino-acid chain; its full sequence is uncharacterized protein (133 aa).

The next 2 membrane-spanning stretches (helical) occupy residues 8–28 and 46–66; these read MVLL…LLLL and SFSI…SIGA.

Its subcellular location is the membrane. This is an uncharacterized protein from Saccharomyces cerevisiae (strain ATCC 204508 / S288c) (Baker's yeast).